Here is a 1823-residue protein sequence, read N- to C-terminus: Laminin subunit alpha-4 (1823 aa).

A signal peptide spans 1–24 (MALSSAWRSVLPLWLLWSAACSRA). Ser-39 carries O-linked (Xyl...) (chondroitin sulfate) serine glycosylation. Disulfide bonds link Cys-82–Cys-91, Cys-84–Cys-98, Cys-101–Cys-110, Cys-113–Cys-129, Cys-132–Cys-146, Cys-134–Cys-155, Cys-157–Cys-166, Cys-169–Cys-184, Cys-187–Cys-202, Cys-189–Cys-209, Cys-212–Cys-221, and Cys-224–Cys-238. Laminin EGF-like domains are found at residues 82-131 (CDCN…FCQP), 132-186 (CPCP…TCKK), and 187-240 (CDCS…NCAV). Asn-104 is a glycosylation site (N-linked (GlcNAc...) asparagine). Residue Asn-215 is glycosylated (N-linked (GlcNAc...) asparagine). The region spanning 241–255 (CNCGGGPCDSVTGEC) is the Laminin EGF-like 4; truncated domain. Positions 256-832 (LEEGFEPPTG…AQTRSVASKI (577 aa)) are domain II and I. Residue Asn-315 is glycosylated (N-linked (GlcNAc...) asparagine). A coiled-coil region spans residues 320 to 403 (LLKTKLSERE…KIQEINNKML (84 aa)). An N-linked (GlcNAc...) asparagine glycan is attached at Asn-465. Positions 473–528 (VVLEQLDDYNAKLSDLQEALDQALNYVRDAEDMNRATAARQRDHEKQQERVREQME) form a coiled coil. 6 N-linked (GlcNAc...) asparagine glycosylation sites follow: Asn-531, Asn-557, Asn-578, Asn-581, Asn-638, and Asn-646. Residues 581 to 614 (NLSHDLVQEAIDHAQDLQQEANELSRKLHSSDMN) are a coiled coil. Positions 662–724 (IIYHKDESEN…AVKQLQAAER (63 aa)) form a coiled coil. Positions 724–726 (RGD) match the Cell attachment site motif. Residues Asn-742, Asn-758, Asn-761, Asn-787, and Asn-810 are each glycosylated (N-linked (GlcNAc...) asparagine). A coiled-coil region spans residues 777–806 (AVNSARDAVRNLTEVVPQLLDQLRTVEQKR). Laminin G-like domains lie at 833–1035 (QVSM…SVPC), 1047–1227 (AASY…GYGC), and 1234–1402 (SRRA…LYEC). Cys-1005 and Cys-1035 are joined by a disulfide. Asn-1093 is a glycosylation site (N-linked (GlcNAc...) asparagine). Cys-1201 and Cys-1227 form a disulfide bridge. Residues Asn-1288 and Asn-1366 are each glycosylated (N-linked (GlcNAc...) asparagine). Cys-1370 and Cys-1402 are oxidised to a cystine. An N-linked (GlcNAc...) asparagine glycan is attached at Asn-1418. The disordered stretch occupies residues 1419 to 1440 (LSKPKASQNKKGGKSKDAPSWD). Laminin G-like domains are found at residues 1469 to 1640 (AYQY…VTPC) and 1647 to 1820 (TGTY…INSC). Disulfide bonds link Cys-1617/Cys-1640 and Cys-1792/Cys-1820.

In terms of assembly, laminin is a complex glycoprotein, consisting of three different polypeptide chains (alpha, beta, gamma), which are bound to each other by disulfide bonds into a cross-shaped molecule comprising one long and three short arms with globules at each end. Alpha-4 is a subunit of laminin-8 (laminin-411), laminin-9 (laminin-421) and laminin-14 (laminin-423). As to expression, detected in placenta (at protein level). Detected in fibroblasts and urine (at protein level). In adult, strong expression in heart, lung, ovary small and large intestines, placenta, liver; weak or no expression in skeletal muscle, kidney, pancreas, testis, prostate, brain. High expression in fetal lung and kidney. Expression in fetal and newborn tissues is observed in certain mesenchymal cells in tissues such as smooth muscle and dermis.

The protein localises to the secreted. It localises to the extracellular space. The protein resides in the extracellular matrix. It is found in the basement membrane. Binding to cells via a high affinity receptor, laminin is thought to mediate the attachment, migration and organization of cells into tissues during embryonic development by interacting with other extracellular matrix components. The protein is Laminin subunit alpha-4 (LAMA4) of Homo sapiens (Human).